A 160-amino-acid polypeptide reads, in one-letter code: Fimbrial protein (160 aa).

The propeptide at 1-7 (MKSLQKG) is leader sequence. Position 8 is an N-methylphenylalanine (phenylalanine 8). The helical transmembrane segment at 8–28 (FTLIELMIVVAIIGILAAFAI) threads the bilayer.

Belongs to the N-Me-Phe pilin family. In terms of assembly, the pili are polar flexible filaments of about 5.4 nanometers diameter and 2.5 micrometers average length; they consist of only a single polypeptide chain arranged in a helical configuration of five subunits per turn in the assembled pilus.

The protein resides in the fimbrium. It localises to the membrane. The sequence is that of Fimbrial protein (fimA) from Dichelobacter nodosus (Bacteroides nodosus).